The primary structure comprises 691 residues: MEESPLSRAPSRGGVNFLNVARTYIPNTKVECHYTLPPGTMPSASDWIGIFKVEAACVRDYHTFVWSSVPESTADGSPIHTSVQFQASYLPKPGAQLYQFRYVNRQGRVCGQSPPFQFREPRPMDELVTLEEADGSSDILLVVPKATVLQNQLDESQQERNDLMQLKLQLEGQVTELRSRVQELERALATARQEHTELMEQYKGISRSHGEITEERDILSRQQGDHVARILELEDDIQTISEKVLTKEVELDRLRDTVKALTREQEKLLGQLKEVQADKEQSEAELQVAQQENHRLNLDLKEAKSWQKEQSAQAQRLKDKVAQMKDTLGQAQQRVAELEPLKEQLRGAQELATSSQQKATLLGEELASAAAARDRTIAELHRSRLEVAEVNGRLAELGLHLKEEKCQWSKERAGLLQSVEAEKDKILKLSAEILRLEKAVQEERTQNHVFKTELAREKDSSLVQLSESKRELTELRSALRVLQKEKEQLQEEKQELLEYMRKLEARLEKVADEKWNEDATTEDEEATAGLSCPAALTDSEDESPEDMRLPPYGLCEHGDPGSSPAGPREASPLVVISQPAPISPHLSGPAEDSSSDSEAEDEKSVLMAAVQSGGEEANLLLPELGNAFYDMASGFTVGPLSETSTGGPATPTWKECPICKERFPAESDKDALEDHMDGHFFFSTQDPFTFE.

The segment at 1-30 (MEESPLSRAPSRGGVNFLNVARTYIPNTKV) is p300 KIX-binding. Residues 1-190 (MEESPLSRAP…VQELERALAT (190 aa)) form an N-terminal AD (CTNNB1 binding site) region. The residue at position 4 (S4) is a Phosphoserine. The interaction with GATA1 stretch occupies residues 45–125 (SDWIGIFKVE…FQFREPRPMD (81 aa)). 3 coiled-coil regions span residues 145–205 (KATV…YKGI), 232–339 (ELED…AELE), and 417–514 (QSVE…ADEK). Residues 501–691 (RKLEARLEKV…FSTQDPFTFE (191 aa)) form a C-terminal AD (CTNNB1 binding site); interaction with CCAR1 region. The tract at residues 513 to 604 (EKWNEDATTE…SDSEAEDEKS (92 aa)) is disordered. The UBZ1-type zinc-finger motif lies at 653-679 (WKECPICKERFPAESDKDALEDHMDGH). The Zn(2+) site is built by C656, C659, H675, and H679.

It belongs to the CALCOCO family. In terms of assembly, part of a calphoglin complex consisting of CALCOCO1, PPA1 and PGM. Interacts with the bHLH-PAS domains of GRIP1, AHR and ARNT. Interacts with CTNNB1 via both its N- and C-terminal regions. Interacts with EP300. Interacts with CCAR1 (via N-terminus) and GATA1.

It localises to the cytoplasm. It is found in the nucleus. Its function is as follows. Functions as a coactivator for aryl hydrocarbon and nuclear receptors (NR). Recruited to promoters through its contact with the N-terminal basic helix-loop-helix-Per-Arnt-Sim (PAS) domain of transcription factors or coactivators, such as NCOA2. During ER-activation acts synergistically in combination with other NCOA2-binding proteins, such as EP300, CREBBP and CARM1. Involved in the transcriptional activation of target genes in the Wnt/CTNNB1 pathway. Functions as a secondary coactivator in LEF1-mediated transcriptional activation via its interaction with CTNNB1. Coactivator function for nuclear receptors and LEF1/CTNNB1 involves differential utilization of two different activation regions. In association with CCAR1 enhances GATA1- and MED1-mediated transcriptional activation from the gamma-globin promoter during erythroid differentiation of K562 erythroleukemia cells. In terms of biological role, seems to enhance inorganic pyrophosphatase thus activating phosphogluomutase (PMG). Probably functions as a component of the calphoglin complex, which is involved in linking cellular metabolism (phosphate and glucose metabolism) with other core functions including protein synthesis and degradation, calcium signaling and cell growth. This is Calcium-binding and coiled-coil domain-containing protein 1 (CALCOCO1) from Pongo abelii (Sumatran orangutan).